The primary structure comprises 393 residues: Elongation factor Tu (393 aa).

In terms of domain architecture, tr-type G spans 6–204 (KPHINVGTIG…ALEKIELPVR (199 aa)). Positions 15–22 (GHVDHGKT) are G1. GTP is bound at residue 15–22 (GHVDHGKT). Thr22 lines the Mg(2+) pocket. Residues 58–62 (GITIS) form a G2 region. A G3 region spans residues 79–82 (DCPG). GTP contacts are provided by residues 79–83 (DCPGH) and 134–137 (NKCD). The segment at 134–137 (NKCD) is G4. The tract at residues 172–174 (SAV) is G5.

It belongs to the TRAFAC class translation factor GTPase superfamily. Classic translation factor GTPase family. EF-Tu/EF-1A subfamily. As to quaternary structure, monomer.

The protein localises to the cytoplasm. The enzyme catalyses GTP + H2O = GDP + phosphate + H(+). Functionally, GTP hydrolase that promotes the GTP-dependent binding of aminoacyl-tRNA to the A-site of ribosomes during protein biosynthesis. In Anaplasma marginale (strain St. Maries), this protein is Elongation factor Tu.